The sequence spans 632 residues: tRNA uridine 5-carboxymethylaminomethyl modification enzyme MnmG (632 aa).

FAD-binding positions include Gly-15 to Gly-20, Val-127, and Ser-182. Gly-276 to Phe-290 serves as a coordination point for NAD(+). Gln-373 contributes to the FAD binding site.

It belongs to the MnmG family. In terms of assembly, homodimer. Heterotetramer of two MnmE and two MnmG subunits. The cofactor is FAD.

It localises to the cytoplasm. Its function is as follows. NAD-binding protein involved in the addition of a carboxymethylaminomethyl (cmnm) group at the wobble position (U34) of certain tRNAs, forming tRNA-cmnm(5)s(2)U34. The sequence is that of tRNA uridine 5-carboxymethylaminomethyl modification enzyme MnmG from Enterococcus faecalis (strain ATCC 700802 / V583).